The chain runs to 239 residues: Probable GTP-binding protein EngB (239 aa).

Residues 23–219 (QVPEIAFAGR…NDKILELLGL (197 aa)) enclose the EngB-type G domain. GTP-binding positions include 31-38 (GRSNAGKS), 58-62 (GRTQH), 92-95 (DLPG), 159-162 (TKSD), and 193-200 (FTAQLFSA). The Mg(2+) site is built by Ser38 and Thr60.

Belongs to the TRAFAC class TrmE-Era-EngA-EngB-Septin-like GTPase superfamily. EngB GTPase family. Requires Mg(2+) as cofactor.

Its function is as follows. Necessary for normal cell division and for the maintenance of normal septation. The chain is Probable GTP-binding protein EngB from Herminiimonas arsenicoxydans.